The chain runs to 512 residues: Reduced folate transporter (512 aa).

M1 carries the N-acetylmethionine modification. The Cytoplasmic segment spans residues 1–29; that stretch reads MVPTGQVAEKQACEEPRQDRELKSWRWLV. The helical transmembrane segment at 30–50 threads the bilayer; it reads FYLCFFGFMAQLRPGESFITP. 2 residues coordinate folate: I48 and T49. At 51-62 the chain is on the extracellular side; it reads YLLERNFTKEQV. N-linked (GlcNAc...) asparagine glycosylation occurs at N56. Residues 63 to 85 traverse the membrane as a helical segment; the sequence is TNEIIPMLPYSHLAVLVPIFLLT. Over 86-89 the chain is Cytoplasmic; it reads DYLR. A helical membrane pass occupies residues 90–110; it reads YKPVLVLQCLSFVCVWLLLLL. Topologically, residues 111-114 are extracellular; the sequence is GTSV. Residues 115-137 form a helical membrane-spanning segment; that stretch reads VHMQLMEVFYSITMAARIAYSSY. Folate contacts are provided by E121 and R131. The Cytoplasmic portion of the chain corresponds to 138–151; that stretch reads IFSLVQPSRYQRMA. The helical transmembrane segment at 152-176 threads the bilayer; it reads SYSRAAVLLGVFISSVLGQVLVTLG. V162 lines the folate pocket. Residues 177-181 are Extracellular-facing; sequence GISTY. Residues 182 to 200 traverse the membrane as a helical segment; that stretch reads MLNCISLGFILFSLSLSLF. At 201–266 the chain is on the cytoplasmic side; sequence LKRPKRSLFF…ELVKNVRQPQ (66 aa). Residues 267-292 form a helical membrane-spanning segment; the sequence is LRLWCLWWVFNSAGYYLITYYVHVLW. Folate is bound by residues Y281, Y282, and Y286. Topologically, residues 293-300 are extracellular; sequence KITDSRLN. A helical transmembrane segment spans residues 301–323; sequence YNGAVDAASTLLSAITAFTAGFV. Topologically, residues 324-329 are cytoplasmic; sequence NIRWAL. Residues 330–350 form a helical membrane-spanning segment; it reads WSKLVIASVIAIQAGLVFCMF. The Extracellular portion of the chain corresponds to 351–353; the sequence is QIP. The helical transmembrane segment at 354-377 threads the bilayer; it reads DIWVCYVTFVLFRGAYQFLVPIAT. R366 and Q370 together coordinate folate. The Cytoplasmic portion of the chain corresponds to 378 to 391; the sequence is FQIASSLSKELCAL. A helical transmembrane segment spans residues 392–415; that stretch reads VFGINTFLATALKTSITLVVSDKR. Positions 400–412 are required for substrate-binding; the sequence is ATALKTSITLVVS. At 416-423 the chain is on the extracellular side; sequence GLGLQVHQ. A helical membrane pass occupies residues 424–448; that stretch reads QFRIYFMYFLTLSIICLAWAGLDGL. Topologically, residues 449 to 512 are cytoplasmic; sequence RYYRRGRHQP…RADLRVEAKA (64 aa). Phosphoserine occurs at positions 466, 471, and 476. The disordered stretch occupies residues 479–512; the sequence is DGDLRRPQPSAPQLLPEDGSVEDGRADLRVEAKA. The span at 500 to 512 shows a compositional bias: basic and acidic residues; the sequence is EDGRADLRVEAKA.

This sequence belongs to the reduced folate carrier (RFC) transporter (TC 2.A.48) family. As to expression, expressed in liver, heart, brain, spleen, lung and skeletal muscle.

The protein localises to the cell membrane. It localises to the apical cell membrane. Its subcellular location is the basolateral cell membrane. It carries out the reaction 5-amino-1-(5-phospho-beta-D-ribosyl)imidazole-4-carboxamide(in) + (6S)-5-methyl-5,6,7,8-tetrahydrofolate(out) = 5-amino-1-(5-phospho-beta-D-ribosyl)imidazole-4-carboxamide(out) + (6S)-5-methyl-5,6,7,8-tetrahydrofolate(in). Antiporter that mediates the import of reduced folates, driven by the export of organic anions. Also acts as an importer of immunoreactive cyclic dinucleotides, but with a lower transporter activity. Mechanistically, acts as a secondary active transporter, which exports intracellular organic anions down their concentration gradients to facilitate the uptake of its substrates. Has high affinity for N5-methyltetrahydrofolate, the predominant circulating form of folate. Also mediates the import of antifolate drug methotrexate. 5-amino-4-imidazolecarboxamide riboside (AICAR), when phosphorylated to AICAR monophosphate, can serve as an organic anion for antiporter activity. The chain is Reduced folate transporter from Rattus norvegicus (Rat).